Here is a 136-residue protein sequence, read N- to C-terminus: Large ribosomal subunit protein uL16 (136 aa).

Belongs to the universal ribosomal protein uL16 family. As to quaternary structure, part of the 50S ribosomal subunit.

Functionally, binds 23S rRNA and is also seen to make contacts with the A and possibly P site tRNAs. The chain is Large ribosomal subunit protein uL16 from Haemophilus influenzae (strain 86-028NP).